Reading from the N-terminus, the 568-residue chain is Sulfite reductase [NADPH] hemoprotein beta-component (568 aa).

[4Fe-4S] cluster contacts are provided by Cys-425, Cys-431, Cys-470, and Cys-474. Cys-474 contributes to the siroheme binding site.

This sequence belongs to the nitrite and sulfite reductase 4Fe-4S domain family. Alpha(8)-beta(8). The alpha component is a flavoprotein, the beta component is a hemoprotein. Siroheme is required as a cofactor. The cofactor is [4Fe-4S] cluster.

The catalysed reaction is hydrogen sulfide + 3 NADP(+) + 3 H2O = sulfite + 3 NADPH + 4 H(+). It participates in sulfur metabolism; hydrogen sulfide biosynthesis; hydrogen sulfide from sulfite (NADPH route): step 1/1. Its function is as follows. Component of the sulfite reductase complex that catalyzes the 6-electron reduction of sulfite to sulfide. This is one of several activities required for the biosynthesis of L-cysteine from sulfate. This Xanthomonas campestris pv. campestris (strain ATCC 33913 / DSM 3586 / NCPPB 528 / LMG 568 / P 25) protein is Sulfite reductase [NADPH] hemoprotein beta-component.